A 108-amino-acid chain; its full sequence is MGSSRVIRHQASNYAQSAYQCHIKEPLLSLFGNEKQHSSGTTAAAAITFPQKLIIDQLTRKRKTKKKKIRKLGLHTSVFFFLRIVCMSSAASVFTGIRCVFMFRTNAK.

A helical transmembrane segment spans residues 72 to 94 (LGLHTSVFFFLRIVCMSSAASVF).

It localises to the membrane. This is an uncharacterized protein from Saccharomyces cerevisiae (strain ATCC 204508 / S288c) (Baker's yeast).